We begin with the raw amino-acid sequence, 374 residues long: Anhydro-N-acetylmuramic acid kinase (374 aa).

ATP is bound at residue 12–19 (GTSLDGVD).

Belongs to the anhydro-N-acetylmuramic acid kinase family.

The catalysed reaction is 1,6-anhydro-N-acetyl-beta-muramate + ATP + H2O = N-acetyl-D-muramate 6-phosphate + ADP + H(+). The protein operates within amino-sugar metabolism; 1,6-anhydro-N-acetylmuramate degradation. It functions in the pathway cell wall biogenesis; peptidoglycan recycling. Catalyzes the specific phosphorylation of 1,6-anhydro-N-acetylmuramic acid (anhMurNAc) with the simultaneous cleavage of the 1,6-anhydro ring, generating MurNAc-6-P. Is required for the utilization of anhMurNAc either imported from the medium or derived from its own cell wall murein, and thus plays a role in cell wall recycling. The protein is Anhydro-N-acetylmuramic acid kinase of Enterobacter sp. (strain 638).